Reading from the N-terminus, the 1161-residue chain is PAN2-PAN3 deadenylation complex catalytic subunit pan2 (1161 aa).

WD repeat units lie at residues 20-59 (GLPTAATTIAFDDVSELLWAGNEFGRITSFYGPELQRYTS) and 276-315 (ANVSFMLGIDISPSGEALAINDAECSIHLWGSPSKIHFNE). Residues 316 to 452 (MSKEVEFADV…GAKLNGEAED (137 aa)) are linker. The USP domain maps to 453-822 (DPLLKYSNVE…SPCILAYQAK (370 aa)). An Exonuclease domain is found at 871–1049 (VALDTEFVDL…IEDARMALRL (179 aa)). Residues Asp-874, Glu-876, Asp-983, and Asp-1042 each contribute to the a divalent metal cation site. A WD 4 repeat occupies 1009 to 1060 (NRRLSLRYLAWAVFKEYIQEEPADNNQGHDSIEDARMALRLWKKFQEYEDAG). The interval 1092–1161 (RPGTAVTMQN…GDFFGGSPLK (70 aa)) is disordered. Polar residues predominate over residues 1097–1110 (VTMQNSSGRNTPST). The segment covering 1116–1129 (AATATATTSAPATP) has biased composition (low complexity). The segment covering 1145–1155 (TFGGPGAGDFF) has biased composition (gly residues).

Belongs to the peptidase C19 family. PAN2 subfamily. As to quaternary structure, forms a heterotrimer with an asymmetric homodimer of the regulatory subunit pan3 to form the poly(A)-nuclease (PAN) deadenylation complex. The cofactor is a divalent metal cation.

Its subcellular location is the cytoplasm. The catalysed reaction is Exonucleolytic cleavage of poly(A) to 5'-AMP.. Positively regulated by the regulatory subunit pan3. Catalytic subunit of the poly(A)-nuclease (PAN) deadenylation complex, one of two cytoplasmic mRNA deadenylases involved in mRNA turnover. PAN specifically shortens poly(A) tails of RNA and the activity is stimulated by poly(A)-binding protein pab1. PAN deadenylation is followed by rapid degradation of the shortened mRNA tails by the CCR4-NOT complex. Deadenylated mRNAs are then degraded by two alternative mechanisms, namely exosome-mediated 3'-5' exonucleolytic degradation, or deadenylation-dependent mRNA decaping and subsequent 5'-3' exonucleolytic degradation by xrn1. May also be involved in post-transcriptional maturation of mRNA poly(A) tails. This chain is PAN2-PAN3 deadenylation complex catalytic subunit pan2, found in Neosartorya fischeri (strain ATCC 1020 / DSM 3700 / CBS 544.65 / FGSC A1164 / JCM 1740 / NRRL 181 / WB 181) (Aspergillus fischerianus).